The primary structure comprises 100 residues: Urease subunit gamma (100 aa).

This sequence belongs to the urease gamma subunit family. As to quaternary structure, heterotrimer of UreA (gamma), UreB (beta) and UreC (alpha) subunits. Three heterotrimers associate to form the active enzyme.

The protein resides in the cytoplasm. It carries out the reaction urea + 2 H2O + H(+) = hydrogencarbonate + 2 NH4(+). Its pathway is nitrogen metabolism; urea degradation; CO(2) and NH(3) from urea (urease route): step 1/1. This is Urease subunit gamma from Bacillus sp. (strain TB-90).